The chain runs to 166 residues: MFNDIGALELLTLGVLAVLVFGPDKLPKLIQDVTRTIRKIREFSDSAKEDIRSELGPQFKDFEFEDLNPKTFVRKQLMDGNDDLGLKEIRESFDLRKEISDVTDAVNGRTPAASDTANSAVNGSAGAAADGVTTSLTKTGETTPDLLKKAPQQAQPERPPFDADAT.

Residues 2–22 (FNDIGALELLTLGVLAVLVFG) traverse the membrane as a helical segment. The tract at residues 110-166 (TPAASDTANSAVNGSAGAAADGVTTSLTKTGETTPDLLKKAPQQAQPERPPFDADAT) is disordered. Residues 117–129 (ANSAVNGSAGAAA) are compositionally biased toward low complexity. Residues 132 to 142 (VTTSLTKTGET) are compositionally biased toward polar residues.

It belongs to the TatB family. As to quaternary structure, the Tat system comprises two distinct complexes: a TatABC complex, containing multiple copies of TatA, TatB and TatC subunits, and a separate TatA complex, containing only TatA subunits. Substrates initially bind to the TatABC complex, which probably triggers association of the separate TatA complex to form the active translocon.

The protein resides in the cell membrane. In terms of biological role, part of the twin-arginine translocation (Tat) system that transports large folded proteins containing a characteristic twin-arginine motif in their signal peptide across membranes. Together with TatC, TatB is part of a receptor directly interacting with Tat signal peptides. TatB may form an oligomeric binding site that transiently accommodates folded Tat precursor proteins before their translocation. This is Sec-independent protein translocase protein TatB from Streptomyces griseus subsp. griseus (strain JCM 4626 / CBS 651.72 / NBRC 13350 / KCC S-0626 / ISP 5235).